The following is a 58-amino-acid chain: DNA-binding protein (58 aa).

Basic residues-rich tracts occupy residues 1–19 and 28–58; these read MVRRRRSRSPYRRRSRSRS and SRYRSRSRSRSRSRSRARSRSPYHHHINQYI. Positions 1 to 58 are disordered; it reads MVRRRRSRSPYRRRSRSRSRSGSDRSRSRYRSRSRSRSRSRSRARSRSPYHHHINQYI.

In terms of processing, probably phosphorylated in infected cells.

Its subcellular location is the virion. Thought to be responsible for DNA condensation during packaging of the nucleocapsids. The chain is DNA-binding protein (P7.3) from Cryptophlebia leucotreta granulosis virus (ClGV).